Here is a 660-residue protein sequence, read N- to C-terminus: Phosphatidylinositol-3-phosphate phosphatase MTMR7 (660 aa).

The Myotubularin phosphatase domain occupies 126–504; that stretch reads GWVLIDLSEE…FMYKFWSGMY (379 aa). The a 1,2-diacyl-sn-glycero-3-phospho-(1D-myo-inositol-3-phosphate) site is built by Asn250, Asn275, and Ile276. Cys338 functions as the Phosphocysteine intermediate in the catalytic mechanism. Residues Ser339, Asp340, Gly341, Trp342, Asp343, Arg344, and Arg384 each contribute to the a 1,2-diacyl-sn-glycero-3-phospho-(1D-myo-inositol-3-phosphate) site. Residues 521-551 adopt a coiled-coil conformation; sequence LMAVKEETQQLEEELEALEERLEKIQKVQLN. A disordered region spans residues 554-660; that stretch reads KVKSKQSEPS…DSDEAVFLTA (107 aa). The segment covering 566 to 596 has biased composition (polar residues); the sequence is SGFSTSDNSIANTPQDYSGNMKSFPSRSPSQ. Thr578 bears the Phosphothreonine mark. Positions 641–653 are enriched in basic and acidic residues; the sequence is APSEDSGKDRDSD.

Belongs to the protein-tyrosine phosphatase family. Non-receptor class myotubularin subfamily. As to quaternary structure, heterodimer (via C-terminus) with MTMR9 (via coiled coil domain); the interaction enhances MTMR7 catalytic activity. Does not homodimerize. Interacts with RAB1B (in GDP-bound form). As to expression, expressed specifically in brain.

The protein localises to the cytoplasm. It localises to the endomembrane system. It catalyses the reaction a 1,2-diacyl-sn-glycero-3-phospho-(1D-myo-inositol-3-phosphate) + H2O = a 1,2-diacyl-sn-glycero-3-phospho-(1D-myo-inositol) + phosphate. The catalysed reaction is 1D-myo-inositol 1,3-bisphosphate + H2O = 1D-myo-inositol 1-phosphate + phosphate. Interaction with MTMR9 increases phosphatase activity. Its function is as follows. Lipid phosphatase that specifically dephosphorylates the D-3 position of phosphatidylinositol 3-phosphate (PtdIns(3)P) and inositol 1,3-bisphosphate (Ins(1,3)P2). The protein is Phosphatidylinositol-3-phosphate phosphatase MTMR7 of Homo sapiens (Human).